The chain runs to 307 residues: MDPSLSDRGHLLTEQANPASQALDQLSPLELVDLFNQEDQHCLAAVAQAREAIAQAIEYAAQAIARGGRLFYIGAGTSGRLGVLDAAECPPTFCSDPEQVQGILAGGSAAMFRSSEGLEDRAEDGAVAIAEYQIGPRDFILGITAGGTTPYVHGALEAARSAGAKTGFLACVPADQVAIAVDVDIRVPVGPEILAGSTRLKAGTVTKMVLNQISTGAMVRIGKVYGNRMVDVAVTNRKLEDRALRILSDLLSIDRQQAAALLGANERSVKQALLQHWTGLEPAEAAALLTEHQGHLRAAVTAFSSLR.

The SIS domain maps to 60–223 (AAQAIARGGR…STGAMVRIGK (164 aa)). Glutamate 88 functions as the Proton donor in the catalytic mechanism. The active site involves glutamate 119.

This sequence belongs to the GCKR-like family. MurNAc-6-P etherase subfamily. Homodimer.

The enzyme catalyses N-acetyl-D-muramate 6-phosphate + H2O = N-acetyl-D-glucosamine 6-phosphate + (R)-lactate. It functions in the pathway amino-sugar metabolism; N-acetylmuramate degradation. Its function is as follows. Specifically catalyzes the cleavage of the D-lactyl ether substituent of MurNAc 6-phosphate, producing GlcNAc 6-phosphate and D-lactate. In Synechococcus elongatus (strain ATCC 33912 / PCC 7942 / FACHB-805) (Anacystis nidulans R2), this protein is N-acetylmuramic acid 6-phosphate etherase.